The following is a 217-amino-acid chain: MEHYEHVITSIVAMVVALGVVLAAGKPKIMPSKLQFVIESYINFCKSMVTENMGEQGLRYLPLIASIGLFVFFGNVMELLPFVDAPTGNINTTLALTLIVFFLYHFEGFRVNGLGYIKHFMGPIKALAPFFFIIEIMSHLGRVVSLSLRLFANMKGGAILLISIIGVLIGNPFTLAVSPIVLVFLITIKVLAIVLQAFIFMILSTIYIAGAVVHEEH.

6 helical membrane-spanning segments follow: residues 5-25 (EHVI…LAAG), 63-83 (LIAS…LPFV), 89-109 (NINT…FEGF), 120-140 (FMGP…MSHL), 157-177 (GAIL…TLAV), and 191-213 (LAIV…GAVV).

This sequence belongs to the ATPase A chain family. In terms of assembly, F-type ATPases have 2 components, CF(1) - the catalytic core - and CF(0) - the membrane proton channel. CF(1) has five subunits: alpha(3), beta(3), gamma(1), delta(1), epsilon(1). CF(0) has three main subunits: a(1), b(2) and c(9-12). The alpha and beta chains form an alternating ring which encloses part of the gamma chain. CF(1) is attached to CF(0) by a central stalk formed by the gamma and epsilon chains, while a peripheral stalk is formed by the delta and b chains.

Its subcellular location is the cell inner membrane. Functionally, key component of the proton channel; it plays a direct role in the translocation of protons across the membrane. The protein is ATP synthase subunit a of Hydrogenobaculum sp. (strain Y04AAS1).